The primary structure comprises 103 residues: MYAVVKTGGKQYKVAAGEKLKVEQIPADIGAEITLDQVLAVGAGDQIKFGTPLVSGASVKATVISQGRHDKVKIFKMRRRKHYQKRQGHRQNYTELRIEAIVA.

This sequence belongs to the bacterial ribosomal protein bL21 family. Part of the 50S ribosomal subunit. Contacts protein L20.

Its function is as follows. This protein binds to 23S rRNA in the presence of protein L20. This chain is Large ribosomal subunit protein bL21, found in Cupriavidus necator (strain ATCC 17699 / DSM 428 / KCTC 22496 / NCIMB 10442 / H16 / Stanier 337) (Ralstonia eutropha).